The sequence spans 318 residues: Small ribosomal subunit protein uS2 (318 aa).

Belongs to the universal ribosomal protein uS2 family.

The protein is Small ribosomal subunit protein uS2 of Mesomycoplasma hyopneumoniae (strain J / ATCC 25934 / NCTC 10110) (Mycoplasma hyopneumoniae).